Here is an 83-residue protein sequence, read N- to C-terminus: Protein YqgD (83 aa).

It belongs to the YqgD family.

This Escherichia coli (strain K12) protein is Protein YqgD (yqgD).